Here is a 489-residue protein sequence, read N- to C-terminus: Glutamyl-tRNA(Gln) amidotransferase subunit A (489 aa).

Active-site charge relay system residues include Lys-78 and Ser-153. The active-site Acyl-ester intermediate is the Ser-177.

The protein belongs to the amidase family. GatA subfamily. In terms of assembly, heterotrimer of A, B and C subunits.

The enzyme catalyses L-glutamyl-tRNA(Gln) + L-glutamine + ATP + H2O = L-glutaminyl-tRNA(Gln) + L-glutamate + ADP + phosphate + H(+). Its function is as follows. Allows the formation of correctly charged Gln-tRNA(Gln) through the transamidation of misacylated Glu-tRNA(Gln) in organisms which lack glutaminyl-tRNA synthetase. The reaction takes place in the presence of glutamine and ATP through an activated gamma-phospho-Glu-tRNA(Gln). The sequence is that of Glutamyl-tRNA(Gln) amidotransferase subunit A from Nitratidesulfovibrio vulgaris (strain DP4) (Desulfovibrio vulgaris).